An 838-amino-acid chain; its full sequence is MAALLYFPKISSQMTSSHFISFSPMDLRRLSRASYLFTRRLKFIAKSRKCFHTSRYLQQCVHRPDKSEETSSDRHLHERLSSVLSKRSLDYEQCKQLITVLSPLEFDRLFPEFRSKVNPKTALDFFRLASDSFSFSFSLRSYCLLIGLLLDANLLSAARVVLIRLINGNVPVLPCGLRDSRVAIADAMASLSLCFDEEIRRKMSDLLIEVYCTQFKRDGCYLALDVFPVLANKGMFPSKTTCNILLTSLVRANEFQKCCEAFDVVCKGVSPDVYLFTTAINAFCKGGKVEEAVKLFSKMEEAGVAPNVVTFNTVIDGLGMCGRYDEAFMFKEKMVERGMEPTLITYSILVKGLTRAKRIGDAYFVLKEMTKKGFPPNVIVYNNLIDSFIEAGSLNKAIEIKDLMVSKGLSLTSSTYNTLIKGYCKNGQADNAERLLKEMLSIGFNVNQGSFTSVICLLCSHLMFDSALRFVGEMLLRNMSPGGGLLTTLISGLCKHGKHSKALELWFQFLNKGFVVDTRTSNALLHGLCEAGKLDEAFRIQKEILGRGCVMDRVSYNTLISGCCGKKKLDEAFMFLDEMVKRGLKPDNYTYSILICGLFNMNKVEEAIQFWDDCKRNGMLPDVYTYSVMIDGCCKAERTEEGQEFFDEMMSKNVQPNTVVYNHLIRAYCRSGRLSMALELREDMKHKGISPNSATYTSLIKGMSIISRVEEAKLLFEEMRMEGLEPNVFHYTALIDGYGKLGQMVKVECLLREMHSKNVHPNKITYTVMIGGYARDGNVTEASRLLNEMREKGIVPDSITYKEFIYGYLKQGGVLEAFKGSDEENYAAIIEGWNKLIQ.

The transit peptide at 1–32 (MAALLYFPKISSQMTSSHFISFSPMDLRRLSR) directs the protein to the chloroplast. PPR repeat units follow at residues 238-268 (SKTTCNILLTSLVRANEFQKCCEAFDVVCKG), 272-306 (DVYLFTTAINAFCKGGKVEEAVKLFSKMEEAGVAP), 307-341 (NVVTFNTVIDGLGMCGRYDEAFMFKEKMVERGMEP), 342-376 (TLITYSILVKGLTRAKRIGDAYFVLKEMTKKGFPP), 377-411 (NVIVYNNLIDSFIEAGSLNKAIEIKDLMVSKGLSL), 412-446 (TSSTYNTLIKGYCKNGQADNAERLLKEMLSIGFNV), 447-481 (NQGSFTSVICLLCSHLMFDSALRFVGEMLLRNMSP), 482-516 (GGGLLTTLISGLCKHGKHSKALELWFQFLNKGFVV), 517-551 (DTRTSNALLHGLCEAGKLDEAFRIQKEILGRGCVM), 552-586 (DRVSYNTLISGCCGKKKLDEAFMFLDEMVKRGLKP), 587-621 (DNYTYSILICGLFNMNKVEEAIQFWDDCKRNGMLP), 622-656 (DVYTYSVMIDGCCKAERTEEGQEFFDEMMSKNVQP), 657-691 (NTVVYNHLIRAYCRSGRLSMALELREDMKHKGISP), 692-726 (NSATYTSLIKGMSIISRVEEAKLLFEEMRMEGLEP), 727-761 (NVFHYTALIDGYGKLGQMVKVECLLREMHSKNVHP), and 762-796 (NKITYTVMIGGYARDGNVTEASRLLNEMREKGIVP).

It belongs to the PPR family. P subfamily.

It localises to the plastid. The protein localises to the chloroplast. The chain is Pentatricopeptide repeat-containing protein At4g19440, chloroplastic from Arabidopsis thaliana (Mouse-ear cress).